A 352-amino-acid polypeptide reads, in one-letter code: Phosphoribosylformylglycinamidine cyclo-ligase (352 aa).

This sequence belongs to the AIR synthase family.

It localises to the cytoplasm. It catalyses the reaction 2-formamido-N(1)-(5-O-phospho-beta-D-ribosyl)acetamidine + ATP = 5-amino-1-(5-phospho-beta-D-ribosyl)imidazole + ADP + phosphate + H(+). It functions in the pathway purine metabolism; IMP biosynthesis via de novo pathway; 5-amino-1-(5-phospho-D-ribosyl)imidazole from N(2)-formyl-N(1)-(5-phospho-D-ribosyl)glycinamide: step 2/2. The sequence is that of Phosphoribosylformylglycinamidine cyclo-ligase from Pseudomonas fluorescens (strain ATCC BAA-477 / NRRL B-23932 / Pf-5).